The following is a 308-amino-acid chain: Cell division protein FtsX (308 aa).

The Extracellular segment spans residues 1–24 (MISRFFRHLFEALKSLKRNGWMTV). Residues 25–45 (AAVSSVMITLTLVAIFASVIF) form a helical membrane-spanning segment. Residues 46 to 178 (NTAKLATDIE…NTERLFKLAS (133 aa)) lie on the Cytoplasmic side of the membrane. Residues 179 to 199 (FIRVWGLGIAALLIFIAAFLI) form a helical membrane-spanning segment. Residues 200 to 236 (SNTIRITIISRSREIQIMRLVGAKNSYIRGPFLLEGA) lie on the Extracellular side of the membrane. Residues 237 to 257 (FIGLLGAIAPSVLVFIVYQIV) form a helical membrane-spanning segment. At 258 to 276 (YQSVNKSLVGQNLSMISPD) the chain is on the cytoplasmic side. Residues 277–297 (LFSPLMIALLFVIGVFIGSLG) form a helical membrane-spanning segment. At 298 to 308 (SGISMRRFLKI) the chain is on the extracellular side.

It belongs to the ABC-4 integral membrane protein family. FtsX subfamily. Interacts with FtsE. Interacts (via large extracellular loop) with PcsB (via N-terminal coiled coil domain). This interaction directs PcsB to equatorial and septal sites of dividing cells.

It localises to the cell membrane. Its function is as follows. Part of the ABC transporter FtsEX involved in asymmetric cellular division facilitating the initiation of sporulation. Required in maintaining normal growth and cellular morphology. This Streptococcus pneumoniae (strain ATCC BAA-255 / R6) protein is Cell division protein FtsX.